The sequence spans 78 residues: Putative membrane protein insertion efficiency factor (78 aa).

It belongs to the UPF0161 family.

It is found in the cell membrane. Its function is as follows. Could be involved in insertion of integral membrane proteins into the membrane. The sequence is that of Putative membrane protein insertion efficiency factor from Bacillus thuringiensis subsp. konkukian (strain 97-27).